The primary structure comprises 503 residues: NAD-dependent protein deacetylase HST1 (503 aa).

The Deacetylase sirtuin-type domain occupies 183–468 (RLPNFNTIDH…SLVAKKCHWD (286 aa)). NAD(+)-binding positions include 208–227 (GAGVSTSLGIPDFRSSEGFY) and 290–293 (QNID). The active-site Proton acceptor is H310. C318, C321, C342, and C345 together coordinate Zn(2+). Residues 412–414 (GTS), 437–439 (NRD), and C454 each bind NAD(+).

The protein belongs to the sirtuin family. Class I subfamily. As to quaternary structure, identified in the Set3C complex with HOS2, SIF2, SNT1, CPR1, HOS4/YIL112W and SET3. Its presence is however not essential for meiotic repression by the Set3C complex. Interacts with SUM1 and RFM1. The interaction with SUM1 is mediated by RFM1. Zn(2+) serves as cofactor.

The protein resides in the nucleus. It carries out the reaction N(6)-acetyl-L-lysyl-[protein] + NAD(+) + H2O = 2''-O-acetyl-ADP-D-ribose + nicotinamide + L-lysyl-[protein]. Functionally, NAD-dependent histone deacetylase involved in telomeric silencing. Histone deacetylase proteins act via the formation of large multiprotein complexes that are responsible for the deacetylation of lysine residues on the N-terminal part of the core histones (H2A, H2B, H3 and H4). Histone deacetylation gives a tag for epigenetic repression and plays an important role in transcriptional regulation, cell cycle progression and developmental events. Restores silencing at HMR in SIR2 mutants when overexpressed. Required to repress middle sporulation genes during vegetative growth. Acts as a sensor of NAD(+) levels and regulator of NAD(+) biosynthesis. Regulates the gene expression of de novo NAD(+) biosynthesis genes. In Saccharomyces cerevisiae (strain ATCC 204508 / S288c) (Baker's yeast), this protein is NAD-dependent protein deacetylase HST1 (HST1).